Consider the following 218-residue polypeptide: Translation initiation factor 6 (218 aa).

This sequence belongs to the eIF-6 family.

Functionally, binds to the 50S ribosomal subunit and prevents its association with the 30S ribosomal subunit to form the 70S initiation complex. The polypeptide is Translation initiation factor 6 (Methanosarcina acetivorans (strain ATCC 35395 / DSM 2834 / JCM 12185 / C2A)).